A 235-amino-acid chain; its full sequence is Uridylate kinase (235 aa).

Residue Gly-10–Ser-11 coordinates ATP. Gly-45 lines the UMP pocket. ATP is bound by residues Gly-46 and Arg-50. Residues Asp-67 and Val-115–Thr-121 each bind UMP. Residues Thr-141, Tyr-147, and Asp-150 each contribute to the ATP site.

Belongs to the UMP kinase family. In terms of assembly, homohexamer.

The protein localises to the cytoplasm. The catalysed reaction is UMP + ATP = UDP + ADP. The protein operates within pyrimidine metabolism; CTP biosynthesis via de novo pathway; UDP from UMP (UMPK route): step 1/1. Inhibited by UTP. Functionally, catalyzes the reversible phosphorylation of UMP to UDP. The chain is Uridylate kinase from Methanocorpusculum labreanum (strain ATCC 43576 / DSM 4855 / Z).